The primary structure comprises 198 residues: Glycerol-3-phosphate acyltransferase (198 aa).

5 helical membrane passes run 2 to 22 (YAVL…AYIL), 48 to 70 (LGYK…AVLI), 75 to 97 (MGNT…PVFL), 111 to 131 (VVMT…VTVI), and 154 to 174 (IFWN…LAIF).

It belongs to the PlsY family. Probably interacts with PlsX.

The protein resides in the cell membrane. It catalyses the reaction an acyl phosphate + sn-glycerol 3-phosphate = a 1-acyl-sn-glycero-3-phosphate + phosphate. It functions in the pathway lipid metabolism; phospholipid metabolism. Functionally, catalyzes the transfer of an acyl group from acyl-phosphate (acyl-PO(4)) to glycerol-3-phosphate (G3P) to form lysophosphatidic acid (LPA). This enzyme utilizes acyl-phosphate as fatty acyl donor, but not acyl-CoA or acyl-ACP. The protein is Glycerol-3-phosphate acyltransferase of Thermoanaerobacter pseudethanolicus (strain ATCC 33223 / 39E) (Clostridium thermohydrosulfuricum).